The sequence spans 295 residues: Glutamate 5-kinase (295 aa).

Lys9 provides a ligand contact to ATP. Residues Ser49, Asp136, and Asn148 each contribute to the substrate site. ATP is bound by residues 168 to 169 and 210 to 216; these read TD and TGGMLTK.

This sequence belongs to the glutamate 5-kinase family.

Its subcellular location is the cytoplasm. The catalysed reaction is L-glutamate + ATP = L-glutamyl 5-phosphate + ADP. Its pathway is amino-acid biosynthesis; L-proline biosynthesis; L-glutamate 5-semialdehyde from L-glutamate: step 1/2. Functionally, catalyzes the transfer of a phosphate group to glutamate to form L-glutamate 5-phosphate. In Neisseria gonorrhoeae (strain NCCP11945), this protein is Glutamate 5-kinase.